The primary structure comprises 415 residues: Gamma-glutamyl phosphate reductase (415 aa).

This sequence belongs to the gamma-glutamyl phosphate reductase family.

It localises to the cytoplasm. It carries out the reaction L-glutamate 5-semialdehyde + phosphate + NADP(+) = L-glutamyl 5-phosphate + NADPH + H(+). It functions in the pathway amino-acid biosynthesis; L-proline biosynthesis; L-glutamate 5-semialdehyde from L-glutamate: step 2/2. Its function is as follows. Catalyzes the NADPH-dependent reduction of L-glutamate 5-phosphate into L-glutamate 5-semialdehyde and phosphate. The product spontaneously undergoes cyclization to form 1-pyrroline-5-carboxylate. This Listeria monocytogenes serotype 4b (strain F2365) protein is Gamma-glutamyl phosphate reductase.